The chain runs to 352 residues: Phosphoribosylformylglycinamidine cyclo-ligase (352 aa).

Belongs to the AIR synthase family.

The protein resides in the cytoplasm. The enzyme catalyses 2-formamido-N(1)-(5-O-phospho-beta-D-ribosyl)acetamidine + ATP = 5-amino-1-(5-phospho-beta-D-ribosyl)imidazole + ADP + phosphate + H(+). It participates in purine metabolism; IMP biosynthesis via de novo pathway; 5-amino-1-(5-phospho-D-ribosyl)imidazole from N(2)-formyl-N(1)-(5-phospho-D-ribosyl)glycinamide: step 2/2. In Stenotrophomonas maltophilia (strain R551-3), this protein is Phosphoribosylformylglycinamidine cyclo-ligase.